The chain runs to 370 residues: Chorismate synthase (370 aa).

2 residues coordinate NADP(+): arginine 48 and arginine 54. Residues 130-132, 242-243, glycine 287, 302-306, and arginine 328 each bind FMN; these read RSS, NA, and KPTSS.

Belongs to the chorismate synthase family. In terms of assembly, homotetramer. FMNH2 serves as cofactor.

It catalyses the reaction 5-O-(1-carboxyvinyl)-3-phosphoshikimate = chorismate + phosphate. It participates in metabolic intermediate biosynthesis; chorismate biosynthesis; chorismate from D-erythrose 4-phosphate and phosphoenolpyruvate: step 7/7. Catalyzes the anti-1,4-elimination of the C-3 phosphate and the C-6 proR hydrogen from 5-enolpyruvylshikimate-3-phosphate (EPSP) to yield chorismate, which is the branch point compound that serves as the starting substrate for the three terminal pathways of aromatic amino acid biosynthesis. This reaction introduces a second double bond into the aromatic ring system. The sequence is that of Chorismate synthase from Xanthobacter autotrophicus (strain ATCC BAA-1158 / Py2).